The primary structure comprises 640 residues: MVVAPSQVEQQNWTPAASAQLYGLDQWGDPYFSVNARGHVLVQPRGDRGGSLDLVELVEGLQSRDLQLPLLIRFEDILEDRLERLHGAFERAIAQYGYGGHYQGVFPVKCNQQRHVVEQLVESGRRWHFGLEAGSKAELLIALSLLDDPKALLICNGYKDQRYIETAILARQLGRQPVVVIEQADEVPRIIEASRNLGAAPLIGVRAKLSTRSTGRWGSSVGEKAKFGLSIPDLLATVEALRDADLLGDLRLLHFHVGSQICDIAVLKDALQEAGQLYVQLASLGAPMGFLDVGGGLGVDYDGSRSATAASTNYSLQNYANDVVATIRECCEPQGIVVPTLVSESGRAIASHFSVLVFNVLGQSGVNQPSIPEAVEGEALIVRNLRETLSGIGPDNLQEAWNDALKFKDDALAAFRLGYLSLTERGKAEQLYWACCSAIADLLPGEEELPDELKGLKAAFASTYYANLSVFRSAPDTWAIDQLFPVMPIHRLEEQPRELGSFADLTCDSDGKLARFIASGSAKPLLELHELKDGEPYWIGLFLGGAYQEVMGNLHNLFGSTNAVSIRLSPGGPYRVEHVVRGQTNSDVLEAMEHNPEALLERLRQASEEAIGSGDLSISAARRLMQHLEGSLRQTTYLEE.

Residue K109 is modified to N6-(pyridoxal phosphate)lysine. 291–301 (LDVGGGLGVDY) contacts substrate.

This sequence belongs to the Orn/Lys/Arg decarboxylase class-II family. SpeA subfamily. Mg(2+) serves as cofactor. Pyridoxal 5'-phosphate is required as a cofactor.

The enzyme catalyses L-arginine + H(+) = agmatine + CO2. The protein operates within amine and polyamine biosynthesis; agmatine biosynthesis; agmatine from L-arginine: step 1/1. Functionally, catalyzes the biosynthesis of agmatine from arginine. This Synechococcus sp. (strain RCC307) protein is Biosynthetic arginine decarboxylase.